The chain runs to 258 residues: Cruciform cutting endonuclease 1, mitochondrial (258 aa).

The region spanning 1-35 is the SAP domain; it reads MATVKLSFLQHICKLTGLSRSGRKDELLRRIVDSP. Aspartate 46 and aspartate 230 together coordinate Mg(2+).

As to quaternary structure, homodimer.

Its subcellular location is the mitochondrion. The catalysed reaction is Endonucleolytic cleavage at a junction such as a reciprocal single-stranded crossover between two homologous DNA duplexes (Holliday junction).. Capable of resolving Holliday junctions. Specific for 4-way junctions. Seems to be important for the maintenance of mitochondrial DNA. Cleaves fixed junctions at the point of strand exchange. Cleaves after 5'-CT-3' and 5'-TT-3' sequences. This is Cruciform cutting endonuclease 1, mitochondrial (cce1) from Schizosaccharomyces pombe (strain 972 / ATCC 24843) (Fission yeast).